Consider the following 254-residue polypeptide: Receptor expression-enhancing protein 2 (254 aa).

The next 2 helical transmembrane spans lie at 1–21 (MVSWIISRLVVLIFGTLYPAY) and 35–55 (YVKWMMYWIVFAFFTTAETLT). The residue at position 152 (Ser-152) is a Phosphoserine. Residues 164–254 (ALPLQGPDGR…KKTSAGGDSA (91 aa)) form a disordered region. Residues 195-204 (SVRSGTNQAD) show a composition bias toward polar residues. Residues 205–219 (PRTEISEDDTGDKAP) are compositionally biased toward basic and acidic residues.

Belongs to the DP1 family. As to quaternary structure, interacts with odorant receptor proteins.

The protein resides in the membrane. In terms of biological role, required for endoplasmic reticulum (ER) network formation, shaping and remodeling. May enhance the cell surface expression of odorant receptors. The protein is Receptor expression-enhancing protein 2 (REEP2) of Bos taurus (Bovine).